Here is a 59-residue protein sequence, read N- to C-terminus: Large ribosomal subunit protein bL32c (59 aa).

The interval 36–59 (KSRSFSGVSEHPKPKGFSRQQTNK) is disordered.

It belongs to the bacterial ribosomal protein bL32 family.

It localises to the plastid. The protein localises to the chloroplast. The sequence is that of Large ribosomal subunit protein bL32c from Oryza nivara (Indian wild rice).